Here is a 332-residue protein sequence, read N- to C-terminus: MVRVAINGFGRIGRIVLRIAMKRDGIDVVAINDPFITNDYAAYMFKYDSTHGRYDGEVTHDDKDLIIDGKAIKCYQERDPADLPWGDNDIDIVIEATGVFTAKDLAEKHITAGAKKVVITGPSATAPMFVKGVNDDKYTSDVTVISNASCTTNCLAPLAKVLQDNFGIEEALMSTVHSQTATQKTVDGPSKKDWRGGRTASANIIPSSTGAAKAVTKVLPELEGKLTGMAFRVPTVDVSVVDLTVRFAKDVTYDEIKAAIKKASEGEMKGILAYTEDAVVSTDFLGDTHSSIFDASAGIQLSPRFVKLVSWYDNEYGFSARVVDMVELVSKA.

NAD(+)-binding positions include 11–12 (RI), aspartate 33, and arginine 78. D-glyceraldehyde 3-phosphate-binding positions include 149-151 (SCT), threonine 180, 209-210 (TG), and arginine 232. Residue cysteine 150 is the Nucleophile of the active site. An NAD(+)-binding site is contributed by asparagine 314.

This sequence belongs to the glyceraldehyde-3-phosphate dehydrogenase family. In terms of assembly, homotetramer.

It localises to the cytoplasm. It catalyses the reaction D-glyceraldehyde 3-phosphate + phosphate + NAD(+) = (2R)-3-phospho-glyceroyl phosphate + NADH + H(+). Its pathway is carbohydrate degradation; glycolysis; pyruvate from D-glyceraldehyde 3-phosphate: step 1/5. The chain is Glyceraldehyde-3-phosphate dehydrogenase 1 (GPD1) from Candida glabrata (strain ATCC 2001 / BCRC 20586 / JCM 3761 / NBRC 0622 / NRRL Y-65 / CBS 138) (Yeast).